The following is a 444-amino-acid chain: Coagulation factor VII (444 aa).

The N-terminal stretch at 1–21 (MAPQARGLGLCSLLALQASLA) is a signal peptide. Residues 22–39 (AVFITQEEAHSVLRRQRR) constitute a propeptide that is removed on maturation. The 45-residue stretch at 40-84 (ANSFLEELRPGSLERECKEELCSFEEAREVFQSTERTKQFWITYN) folds into the Gla domain. Glu-45, Glu-46, Glu-53, Glu-55, Glu-58, Glu-59, Glu-64, Glu-65, Glu-68, and Glu-74 each carry 4-carboxyglutamate. Cysteines 56 and 61 form a disulfide. The EGF-like 1; calcium-binding domain occupies 85 to 121 (DGDQCASNPCQNGGSCEDQIQSYICFCLADFEGRNCE). 9 disulfide bridges follow: Cys-89–Cys-100, Cys-94–Cys-109, Cys-111–Cys-120, Cys-130–Cys-141, Cys-137–Cys-151, Cys-153–Cys-166, Cys-174–Cys-301, Cys-198–Cys-203, and Cys-217–Cys-233. O-linked (Glc...) serine; alternate glycosylation occurs at Ser-91. Ser-91 carries O-linked (Xyl...) serine; alternate glycosylation. Ser-99 carries an O-linked (Fuc) serine glycan. Asp-102 bears the (3R)-3-hydroxyaspartate mark. Residues 126–167 (DQLICMYENGGCEQYCSDHVGSQRSCRCHEGYTLLPNGVSCT) enclose the EGF-like 2 domain. Positions 192–431 (IVGGKVCPKG…YTEWLSRLMR (240 aa)) constitute a Peptidase S1 domain. N-linked (GlcNAc...) asparagine glycosylation occurs at Asn-211. The active-site Charge relay system is the His-232. Asn-242 carries N-linked (GlcNAc...) asparagine glycosylation. The Charge relay system role is filled by Asp-281. Asn-306 carries N-linked (GlcNAc...) asparagine glycosylation. The cysteines at positions 349 and 368 are disulfide-linked. Asp-377 lines the substrate pocket. A disulfide bridge connects residues Cys-379 and Cys-407. The active-site Charge relay system is Ser-383.

Belongs to the peptidase S1 family. Heterodimer of a light chain and a heavy chain linked by a disulfide bond. In terms of processing, the vitamin K-dependent, enzymatic carboxylation of some glutamate residues allows the modified protein to bind calcium. Post-translationally, the iron and 2-oxoglutarate dependent 3-hydroxylation of aspartate and asparagine is (R) stereospecific within EGF domains. O-glycosylated. O-fucosylated by POFUT1 on a conserved serine or threonine residue found in the consensus sequence C2-X(4,5)-[S/T]-C3 of EGF domains, where C2 and C3 are the second and third conserved cysteines. In terms of processing, can be either O-glucosylated or O-xylosylated at Ser-91 by POGLUT1. As to expression, plasma.

It is found in the secreted. The enzyme catalyses Selective cleavage of Arg-|-Ile bond in factor X to form factor Xa.. In terms of biological role, initiates the extrinsic pathway of blood coagulation. Serine protease that circulates in the blood in a zymogen form. Factor VII is converted to factor VIIa by factor Xa, factor XIIa, factor IXa, or thrombin by minor proteolysis. In the presence of tissue factor and calcium ions, factor VIIa then converts factor X to factor Xa by limited proteolysis. Factor VIIa also converts factor IX to factor IXa in the presence of tissue factor and calcium. This Oryctolagus cuniculus (Rabbit) protein is Coagulation factor VII (F7).